A 216-amino-acid chain; its full sequence is Elongation factor Ts (216 aa).

An involved in Mg(2+) ion dislocation from EF-Tu region spans residues 81–84 (TDFV).

The protein belongs to the EF-Ts family.

It localises to the cytoplasm. Its function is as follows. Associates with the EF-Tu.GDP complex and induces the exchange of GDP to GTP. It remains bound to the aminoacyl-tRNA.EF-Tu.GTP complex up to the GTP hydrolysis stage on the ribosome. This Citrifermentans bemidjiense (strain ATCC BAA-1014 / DSM 16622 / JCM 12645 / Bem) (Geobacter bemidjiensis) protein is Elongation factor Ts.